The primary structure comprises 216 residues: Germin-like protein 1-1 (216 aa).

A signal peptide spans 1 to 24 (MARVQLWVAAACAVVLALAAPSLA). The cysteines at positions 34 and 49 are disulfide-linked. Asparagine 52 and asparagine 76 each carry an N-linked (GlcNAc...) asparagine glycan. The Cupin type-1 domain maps to 61–209 (AGLKNPGNTN…AFRVDVPQVD (149 aa)). Mn(2+)-binding residues include histidine 109, histidine 111, glutamate 116, and histidine 155.

It belongs to the germin family. As to quaternary structure, oligomer (believed to be a pentamer but probably hexamer).

Its subcellular location is the secreted. The protein localises to the extracellular space. It localises to the apoplast. May play a role in plant defense. Probably has no oxalate oxidase activity even if the active site is conserved. In Oryza sativa subsp. japonica (Rice), this protein is Germin-like protein 1-1 (GER4).